A 164-amino-acid polypeptide reads, in one-letter code: UPF0114 protein KPN78578_33570 (164 aa).

Transmembrane regions (helical) follow at residues 15–35, 53–73, 109–126, and 136–156; these read LLAPVYFGLSLGLIALTIKFF, MILTLLSLVDMTLVGGLLVMV, VAASIVAISSIHLLRVFM, and LMWYVIIHLTFVLSAFVMGYL.

The protein belongs to the UPF0114 family.

The protein resides in the cell membrane. This Klebsiella pneumoniae subsp. pneumoniae (strain ATCC 700721 / MGH 78578) protein is UPF0114 protein KPN78578_33570.